The chain runs to 127 residues: uncharacterized protein (127 aa).

A compositionally biased stretch (polar residues) spans 1-17 (MQGSVQIQKGNISSSYT). Residues 1 to 36 (MQGSVQIQKGNISSSYTPEKHPSHPTSANGSMSPKR) form a disordered region.

This is an uncharacterized protein from Treponema pallidum (strain Nichols).